Reading from the N-terminus, the 580-residue chain is 2-succinyl-5-enolpyruvyl-6-hydroxy-3-cyclohexene-1-carboxylate synthase (580 aa).

Positions 178-199 (LEPTPMPGDLTEPPAAAQPRDD) are disordered.

The protein belongs to the TPP enzyme family. MenD subfamily. As to quaternary structure, homodimer. Mg(2+) is required as a cofactor. It depends on Mn(2+) as a cofactor. Thiamine diphosphate serves as cofactor.

The catalysed reaction is isochorismate + 2-oxoglutarate + H(+) = 5-enolpyruvoyl-6-hydroxy-2-succinyl-cyclohex-3-ene-1-carboxylate + CO2. The protein operates within quinol/quinone metabolism; 1,4-dihydroxy-2-naphthoate biosynthesis; 1,4-dihydroxy-2-naphthoate from chorismate: step 2/7. It participates in quinol/quinone metabolism; menaquinone biosynthesis. Catalyzes the thiamine diphosphate-dependent decarboxylation of 2-oxoglutarate and the subsequent addition of the resulting succinic semialdehyde-thiamine pyrophosphate anion to isochorismate to yield 2-succinyl-5-enolpyruvyl-6-hydroxy-3-cyclohexene-1-carboxylate (SEPHCHC). This Roseiflexus castenholzii (strain DSM 13941 / HLO8) protein is 2-succinyl-5-enolpyruvyl-6-hydroxy-3-cyclohexene-1-carboxylate synthase.